The following is a 334-amino-acid chain: Delta(1)-pyrroline-2-carboxylate/Delta(1)-piperideine-2-carboxylate reductase (334 aa).

Ser44 serves as the catalytic Charge relay system. The Proton donor role is filled by His45. Arg49 is a substrate binding site. An NADP(+)-binding site is contributed by 117 to 121 (HFSAL). Thr157 serves as a coordination point for substrate. 175 to 177 (DFA) lines the NADP(+) pocket. 183-184 (RG) contributes to the substrate binding site. The Charge relay system role is filled by Glu185. NADP(+) contacts are provided by residues 226-227 (HK) and 301-307 (RLPSQRR).

It belongs to the LDH2/MDH2 oxidoreductase family. As to quaternary structure, homodimer.

It carries out the reaction L-pipecolate + NADP(+) = Delta(1)-piperideine-2-carboxylate + NADPH + H(+). It catalyses the reaction L-proline + NADP(+) = 1-pyrroline-2-carboxylate + NADPH + H(+). The catalysed reaction is cis-4-hydroxy-L-proline + NADP(+) = Delta(1)-pyrroline-(4S)-hydroxy-2-carboxylate + NADPH + 2 H(+). Its function is as follows. Catalyzes the reduction of both Delta(1)-pyrroline-2-carboxylate (Pyr2C) and Delta(1)-piperideine-2-carboxylate (Pip2C) to L-proline and L-pipecolate, respectively, using NADPH as the electron donor. Cannot use NADH instead of NADPH. Is likely involved in a degradation pathway that converts trans-3-hydroxy-L-proline (t3LHyp) to L-proline, which would allow P.aeruginosa to grow on t3LHyp as a sole carbon source. Can also catalyze the reverse oxidation reactions, albeit at a much lower rate. Is also able to use Delta(1)-pyrroline-(4S)-hydroxy-2-carboxylate (Pyr4SH2C) and cis-4-hydroxy-L-proline (c4LHyp) as substrates, and might be involved in the metabolism of c4LHyp, a compound which is generated by the hydroxylation of free L-proline in bacteria. The chain is Delta(1)-pyrroline-2-carboxylate/Delta(1)-piperideine-2-carboxylate reductase from Pseudomonas aeruginosa (strain ATCC 15692 / DSM 22644 / CIP 104116 / JCM 14847 / LMG 12228 / 1C / PRS 101 / PAO1).